Reading from the N-terminus, the 48-residue chain is Photosystem II reaction center protein K (48 aa).

The propeptide occupies 1 to 11 (MFPSTNQEVLA). The helical transmembrane segment at 23 to 43 (IVDVLPIIPLLFLLLAFVWQA) threads the bilayer.

The protein belongs to the PsbK family. PSII is composed of 1 copy each of membrane proteins PsbA, PsbB, PsbC, PsbD, PsbE, PsbF, PsbH, PsbI, PsbJ, PsbK, PsbL, PsbM, PsbT, PsbY, PsbZ, Psb30/Ycf12, at least 3 peripheral proteins of the oxygen-evolving complex and a large number of cofactors. It forms dimeric complexes.

It is found in the plastid. Its subcellular location is the chloroplast thylakoid membrane. Its function is as follows. One of the components of the core complex of photosystem II (PSII). PSII is a light-driven water:plastoquinone oxidoreductase that uses light energy to abstract electrons from H(2)O, generating O(2) and a proton gradient subsequently used for ATP formation. It consists of a core antenna complex that captures photons, and an electron transfer chain that converts photonic excitation into a charge separation. The polypeptide is Photosystem II reaction center protein K (Euglena sanguinea).